Here is a 595-residue protein sequence, read N- to C-terminus: Pyranose dehydrogenase (595 aa).

An N-terminal signal peptide occupies residues 1 to 21; sequence MARFNARLFSIAILGFQVARS. Residues N95 and N110 are each glycosylated (N-linked (GlcNAc...) asparagine). Tele-8alpha-FAD histidine is present on H123. N-linked (GlcNAc...) asparagine glycosylation is found at N195, N337, N367, N502, and N510. H530 (proton acceptor) is an active-site residue. A glycan (N-linked (GlcNAc...) asparagine) is linked at N541. H574 is a catalytic residue.

Belongs to the GMC oxidoreductase family. In terms of assembly, monomer. It depends on FAD as a cofactor. In terms of processing, N-glycosylated.

The protein resides in the secreted. It catalyses the reaction pyranose + acceptor = pyranos-2-ulose + reduced acceptor.. The enzyme catalyses pyranose + acceptor = pyranos-3-ulose + reduced acceptor.. It carries out the reaction pyranose + acceptor = pyranos-2,3-diulose + reduced acceptor.. The catalysed reaction is a pyranoside + acceptor = a pyranosid-3-ulose + reduced acceptor.. It catalyses the reaction a pyranoside + acceptor = a pyranosid-3,4-diulose + reduced acceptor.. Functionally, catalyzes the single-oxidation or sequential double oxidation reaction of carbohydrates primarily at carbon-2 and/or carbon-3 with the concomitant reduction of the flavin. The enzyme exhibits a broad sugar substrate specificity, oxidizing different aldopyranoses to the corresponding C-1, C-2, C-3 or C-1,2, C-2,3 and C-3,4 (di)dehydro sugars with substrate-specific regioselectivity. Accepts only a narrow range of electron acceptors such as substituted benzoquinones and complexed metal ions and reacts extremely slowly with O(2) as acceptor. May play a role in the natural recycling of plant matter by oxidizing all major monosaccharides in lignocellulose and by reducing quinone compounds or reactive radical species generated during lignin depolymerization. This Agaricus campestris (Field mushroom) protein is Pyranose dehydrogenase.